The chain runs to 222 residues: Phosphoenolpyruvate guanylyltransferase (222 aa).

Phosphoenolpyruvate contacts are provided by Thr-134, Gly-150, and Ser-153.

The protein belongs to the CofC family.

It catalyses the reaction phosphoenolpyruvate + GTP + H(+) = enolpyruvoyl-2-diphospho-5'-guanosine + diphosphate. It participates in cofactor biosynthesis; coenzyme F420 biosynthesis. In terms of biological role, guanylyltransferase that catalyzes the activation of phosphoenolpyruvate (PEP) as enolpyruvoyl-2-diphospho-5'-guanosine, via the condensation of PEP with GTP. It is involved in the biosynthesis of coenzyme F420, a hydride carrier cofactor. The protein is Phosphoenolpyruvate guanylyltransferase of Roseiflexus sp. (strain RS-1).